Here is a 275-residue protein sequence, read N- to C-terminus: Undecaprenyl-diphosphatase (275 aa).

7 helical membrane-spanning segments follow: residues Met1–Val21, Ile41–Ala61, Leu95–Phe115, Phe118–Thr138, Ala192–Val212, Phe223–Ile243, and Leu255–Leu275.

This sequence belongs to the UppP family.

Its subcellular location is the cell membrane. The catalysed reaction is di-trans,octa-cis-undecaprenyl diphosphate + H2O = di-trans,octa-cis-undecaprenyl phosphate + phosphate + H(+). In terms of biological role, catalyzes the dephosphorylation of undecaprenyl diphosphate (UPP). Confers resistance to bacitracin. This chain is Undecaprenyl-diphosphatase, found in Alkaliphilus metalliredigens (strain QYMF).